The chain runs to 482 residues: Glutamyl-tRNA(Gln) amidotransferase subunit A (482 aa).

Catalysis depends on charge relay system residues Lys-75 and Ser-150. Ser-174 serves as the catalytic Acyl-ester intermediate.

It belongs to the amidase family. GatA subfamily. Heterotrimer of A, B and C subunits.

It carries out the reaction L-glutamyl-tRNA(Gln) + L-glutamine + ATP + H2O = L-glutaminyl-tRNA(Gln) + L-glutamate + ADP + phosphate + H(+). Allows the formation of correctly charged Gln-tRNA(Gln) through the transamidation of misacylated Glu-tRNA(Gln) in organisms which lack glutaminyl-tRNA synthetase. The reaction takes place in the presence of glutamine and ATP through an activated gamma-phospho-Glu-tRNA(Gln). In Rippkaea orientalis (strain PCC 8801 / RF-1) (Cyanothece sp. (strain PCC 8801)), this protein is Glutamyl-tRNA(Gln) amidotransferase subunit A.